The primary structure comprises 379 residues: Subtilisin Carlsberg (379 aa).

An N-terminal signal peptide occupies residues 1-29 (MMRKKSFWLGMLTAFMLVFTMAFSDSASA). Positions 30–105 (AQPAKNVEKD…VEEDHVAHAL (76 aa)) are excised as a propeptide. One can recognise an Inhibitor I9 domain in the interval 44-102 (FKSGVKTASVKKDIIKESGGKVDKQFRIINAAKAKLDKEALKEVKNDPDVAYVEEDHVA). Q107 is a Ca(2+) binding site. The 269-residue stretch at 110 to 378 (PYGIPLIKAD…KGLINVEAAA (269 aa)) folds into the Peptidase S8 domain. The active-site Charge relay system is the D137. D146 contributes to the Ca(2+) binding site. H168 (charge relay system) is an active-site residue. Ca(2+)-binding residues include L179, N181, T183, V185, A273, Y275, and V278. S325 functions as the Charge relay system in the catalytic mechanism.

Belongs to the peptidase S8 family. Ca(2+) serves as cofactor.

It is found in the secreted. It carries out the reaction Hydrolysis of proteins with broad specificity for peptide bonds, and a preference for a large uncharged residue in P1. Hydrolyzes peptide amides.. With respect to regulation, inhibited by p-chlorophenyl and 1-naphthyl boronic acid derivatives. In terms of biological role, subtilisin is an extracellular alkaline serine protease, it catalyzes the hydrolysis of proteins and peptide amides. Shows high specificity for aromatic and hydrophobic amino acids in the P1 substrate position. May play an important role in the degradation of feather keratin. The chain is Subtilisin Carlsberg from Bacillus licheniformis.